Here is a 764-residue protein sequence, read N- to C-terminus: uncharacterized protein (764 aa).

This is an uncharacterized protein from Acanthamoeba polyphaga (Amoeba).